Reading from the N-terminus, the 193-residue chain is Probable DNA-directed RNA polymerase subunit delta (193 aa).

In terms of domain architecture, HTH HARE-type spans 14 to 83 (LSMIEVARAI…GDNKWGLRSW (70 aa)). 2 stretches are compositionally biased toward acidic residues: residues 119–133 (EDAI…EDEN) and 143–193 (YDND…ETND). Residues 119–193 (EDAIDYNDDD…DDDYEDETND (75 aa)) form a disordered region.

This sequence belongs to the RpoE family. In terms of assembly, RNAP is composed of a core of 2 alpha, a beta and a beta' subunits. The core is associated with a delta subunit and one of several sigma factors.

In terms of biological role, participates in both the initiation and recycling phases of transcription. In the presence of the delta subunit, RNAP displays an increased specificity of transcription, a decreased affinity for nucleic acids, and an increased efficiency of RNA synthesis because of enhanced recycling. This Streptococcus thermophilus (strain CNRZ 1066) protein is Probable DNA-directed RNA polymerase subunit delta.